The chain runs to 246 residues: tRNA pseudouridine synthase A (246 aa).

Residue Asp-52 is the Nucleophile of the active site. Tyr-111 is a binding site for substrate.

This sequence belongs to the tRNA pseudouridine synthase TruA family. Homodimer.

The catalysed reaction is uridine(38/39/40) in tRNA = pseudouridine(38/39/40) in tRNA. In terms of biological role, formation of pseudouridine at positions 38, 39 and 40 in the anticodon stem and loop of transfer RNAs. This Borreliella burgdorferi (strain ATCC 35210 / DSM 4680 / CIP 102532 / B31) (Borrelia burgdorferi) protein is tRNA pseudouridine synthase A.